A 318-amino-acid chain; its full sequence is NADH-ubiquinone oxidoreductase chain 1 (318 aa).

The next 8 membrane-spanning stretches (helical) occupy residues 1 to 21 (MLPI…VAFL), 71 to 91 (LLIL…TPIP), 101 to 121 (LGLL…LWAG), 145 to 165 (VTLG…TMQL), 172 to 192 (HIWL…STLA), 224 to 244 (FFLA…IMFI), 253 to 273 (ELFL…FLWI), and 294 to 314 (LPLT…ISGI).

This sequence belongs to the complex I subunit 1 family.

The protein resides in the mitochondrion inner membrane. The catalysed reaction is a ubiquinone + NADH + 5 H(+)(in) = a ubiquinol + NAD(+) + 4 H(+)(out). Functionally, core subunit of the mitochondrial membrane respiratory chain NADH dehydrogenase (Complex I) that is believed to belong to the minimal assembly required for catalysis. Complex I functions in the transfer of electrons from NADH to the respiratory chain. The immediate electron acceptor for the enzyme is believed to be ubiquinone. This Varanus rudicollis (Rough-necked monitor lizard) protein is NADH-ubiquinone oxidoreductase chain 1 (MT-ND1).